Here is a 61-residue protein sequence, read N- to C-terminus: Large ribosomal subunit protein uL30 (61 aa).

This sequence belongs to the universal ribosomal protein uL30 family. Part of the 50S ribosomal subunit.

The chain is Large ribosomal subunit protein uL30 from Lactobacillus delbrueckii subsp. bulgaricus (strain ATCC 11842 / DSM 20081 / BCRC 10696 / JCM 1002 / NBRC 13953 / NCIMB 11778 / NCTC 12712 / WDCM 00102 / Lb 14).